We begin with the raw amino-acid sequence, 824 residues long: Ras guanine nucleotide exchange factor I (824 aa).

Disordered stretches follow at residues 1-51 (MSNP…KPTK) and 65-167 (GSNL…LILD). A compositionally biased stretch (low complexity) spans 8-41 (SNSTNGSSNSLNGESVSPNRLGSSPGSPISKASS). The segment covering 83-95 (NSSVGLLNNSTGS) has biased composition (polar residues). Positions 104 to 116 (SSPKSSYILSSSI) are enriched in low complexity. Residues 117–128 (GSGGSGGGGGSS) show a composition bias toward gly residues. Low complexity predominate over residues 136 to 167 (SASNNSSGPRSRSGSLGKNNSSQQNNNNLILD). The LisH domain maps to 223–255 (GRDNILQLILQHLQFEGLMDSRKILEEEAKIQY). Disordered regions lie at residues 330-354 (YVDE…TTAT) and 398-425 (NTQQ…STGT). Positions 331 to 341 (VDEKDNDKPSK) are enriched in basic and acidic residues. Over residues 343-354 (SPTTATTTTTAT) the composition is skewed to low complexity. A compositionally biased stretch (polar residues) spans 413-425 (LKSTQSITGSTGT). One can recognise an N-terminal Ras-GEF domain in the interval 426 to 551 (LGPQVKAASL…VISDALNSGL (126 aa)). In terms of domain architecture, Ras-GEF spans 585–816 (DEEEISRQLT…YTRSMSFEPR (232 aa)).

Functionally, promotes the exchange of Ras-bound GDP by GTP. The polypeptide is Ras guanine nucleotide exchange factor I (gefI) (Dictyostelium discoideum (Social amoeba)).